Reading from the N-terminus, the 610-residue chain is Alpha-fetoprotein (610 aa).

The first 18 residues, 1 to 18 (MKWVVSFFLLFLLNFSDS), serve as a signal peptide directing secretion. Albumin domains are found at residues 19 to 210 (RTMH…TSIT), 211 to 403 (KELR…EELE), and 404 to 602 (KYIQ…ALIS). Position 22 (His22) interacts with Cu(2+). 8 disulfide bridges follow: Cys99/Cys114, Cys113/Cys124, Cys148/Cys193, Cys192/Cys201, Cys224/Cys270, Cys269/Cys277, Cys289/Cys303, and Cys302/Cys314. Phosphoserine is present on residues Ser111 and Ser115. Asn197 and Asn251 each carry an N-linked (GlcNAc...) asparagine glycan. Ser345 carries the phosphoserine modification. Intrachain disulfides connect Cys385-Cys394, Cys417-Cys463, Cys462-Cys473, Cys486-Cys502, Cys501-Cys512, Cys539-Cys584, and Cys583-Cys592. At Ser445 the chain carries Phosphoserine.

The protein belongs to the ALB/AFP/VDB family. As to quaternary structure, dimeric and trimeric forms have been found in addition to the monomeric form. Sulfated. In terms of tissue distribution, plasma.

It localises to the secreted. Its function is as follows. Binds copper, nickel, and fatty acids as well as, and bilirubin less well than, serum albumin. The sequence is that of Alpha-fetoprotein (AFP) from Bos taurus (Bovine).